The sequence spans 168 residues: Peptide methionine sulfoxide reductase 2 (168 aa).

The MsrB domain maps to 40–168; that stretch reads DVKWNDALTP…NSASLNLKKD (129 aa). Positions 79, 82, 128, and 131 each coordinate Zn(2+). Cysteine 97 and cysteine 157 are disulfide-bonded. The Nucleophile role is filled by cysteine 157.

It belongs to the MsrB Met sulfoxide reductase family. It depends on Zn(2+) as a cofactor.

The enzyme catalyses L-methionyl-[protein] + [thioredoxin]-disulfide + H2O = L-methionyl-(R)-S-oxide-[protein] + [thioredoxin]-dithiol. In terms of biological role, methionine-R-sulfoxide reductase which catalyzes the reduction of methionine sulfoxide (MetSO) to methionine in proteins. Plays a protective role against oxidative stress by restoring activity to proteins that have been inactivated by methionine oxidation. Protects iron-sulfur clusters from oxidative inactivation along with MXR1. Involved in the regulation of lifespan. In Saccharomyces cerevisiae (strain ATCC 204508 / S288c) (Baker's yeast), this protein is Peptide methionine sulfoxide reductase 2 (MXR2).